Reading from the N-terminus, the 394-residue chain is Histidinol dehydrogenase (394 aa).

Positions 113, 172, and 195 each coordinate NAD(+). Substrate is bound by residues Thr-218, Gln-240, and His-243. Residues Gln-240 and His-243 each contribute to the Zn(2+) site. Residues Glu-294 and His-295 each act as proton acceptor in the active site. Substrate is bound by residues His-295, Asp-327, Glu-380, and His-385. Zn(2+) is bound at residue Asp-327. His-385 is a Zn(2+) binding site.

This sequence belongs to the histidinol dehydrogenase family. Requires Zn(2+) as cofactor.

The catalysed reaction is L-histidinol + 2 NAD(+) + H2O = L-histidine + 2 NADH + 3 H(+). Its pathway is amino-acid biosynthesis; L-histidine biosynthesis; L-histidine from 5-phospho-alpha-D-ribose 1-diphosphate: step 9/9. Its function is as follows. Catalyzes the sequential NAD-dependent oxidations of L-histidinol to L-histidinaldehyde and then to L-histidine. The chain is Histidinol dehydrogenase from Sulfurisphaera tokodaii (strain DSM 16993 / JCM 10545 / NBRC 100140 / 7) (Sulfolobus tokodaii).